The primary structure comprises 238 residues: Xyloglucan-specific endo-beta-1,4-glucanase A (238 aa).

Positions 1 to 14 (MKLSLLSLATLASA) are cleaved as a signal peptide.

Belongs to the glycosyl hydrolase 12 (cellulase H) family.

It localises to the secreted. The enzyme catalyses xyloglucan + H2O = xyloglucan oligosaccharides.. Its function is as follows. Catalyzes endohydrolysis of 1,4-beta-D-glucosidic linkages in xyloglucan with retention of the beta-configuration of the glycosyl residues. Specific for xyloglucan and does not hydrolyze other cell wall components. The chain is Xyloglucan-specific endo-beta-1,4-glucanase A (xgeA) from Aspergillus aculeatus.